The following is a 1403-amino-acid chain: Envelopment polyprotein (1403 aa).

A signal peptide spans 1-17 (MLLNIVLISNLACLAFA). Residues 18–209 (LPLKEGTRGS…ELMIESFCTN (192 aa)) are Lumenal-facing. An N-linked (GlcNAc...) asparagine; by host glycan is attached at N40. Residues 210–230 (LELILLVTFILVGSVMMMILT) form a helical membrane-spanning segment. Topologically, residues 231–314 (KTYIVYVFIP…PKTRKLCKSK (84 aa)) are cytoplasmic. The chain crosses the membrane as a helical span at residues 315–335 (ISNIVLCVITSLIFFSFITPI). Residues 336–361 (SSQCIDIEKLPDEYITCKRELANIKS) are Lumenal-facing. The helical transmembrane segment at 362-382 (LTIDDTYSFIYSCTCIIVLIL) threads the bilayer. Topologically, residues 383–448 (LKKAAKYILY…FKFESSYNRT (66 aa)) are cytoplasmic. Residues 449–469 (GLIIFMLLLVPTIVMTQETSI) form a helical membrane-spanning segment. Over 470 to 1361 (NCKNIQSTQL…GNLSFYWRLT (892 aa)) the chain is Lumenal. Cysteines 471 and 487 form a disulfide. The N-linked (GlcNAc...) asparagine; by host glycan is linked to N493. Intrachain disulfides connect C523–C550, C580–C589, and C591–C598. Residues N686 and N1353 are each glycosylated (N-linked (GlcNAc...) asparagine; by host). The helical transmembrane segment at 1362–1382 (IYIIISLIMLILFLYILIPLC) threads the bilayer. Topologically, residues 1383 to 1403 (KRLKGLLEYNERIYQMENKFK) are cytoplasmic.

The protein belongs to the nairovirus envelope glycoprotein family. As to quaternary structure, heterodimer with glycoprotein C; in prefusion state. Heterodimer with glycoprotein N; in prefusion state. Homotrimeric; in postfusion state. In terms of processing, specific enzymatic cleavage by host MBTPS1/S1P/SKI-1 endopeptidase yield glycoprotein N. Specific enzymatic cleavages by host furin-like protease and MBTPS1/S1P endopeptidase yield GP38. Glycosylated.

The protein resides in the host endoplasmic reticulum membrane. It is found in the virion membrane. It localises to the host Golgi apparatus membrane. In terms of biological role, glycoprotein C and glycoprotein N interact with each other and are present at the surface of the virion. Glycoprotein N probably locks the Gn-Gc complex in a prefusion state. Glycoprotein N and glycoprotein C are able to attach the virion to host cell receptors. This attachment induces virion internalization predominantly through clathrin-dependent endocytosis. Its function is as follows. Glycoprotein C and glycoprotein N interact with each other and are present at the surface of the virion. The spikes at the surface of the virion are formed by an N-terminal extension of glycoprotein C. Glycoprotein N and glycoprotein C are able to attach the virion to host cell receptors. This attachment induces virion internalization predominantly through clathrin-dependent endocytosis. Class II fusion protein that promotes fusion of viral membrane with host endosomal membrane after endocytosis of the virion. Exposure to potassium is necessary for the conformational change leading to fusion. The sequence is that of Envelopment polyprotein (GP) from Bos taurus (Bovine).